A 403-amino-acid chain; its full sequence is Tyrosine--tRNA ligase (403 aa).

The 'HIGH' region signature appears at 45 to 54 (PTAPDLHLGH). The 'KMSKS' region motif lies at 229 to 233 (KMSKS). K232 contacts ATP. One can recognise an S4 RNA-binding domain in the interval 341–402 (VLLGRLLAEA…GKRRFARIVF (62 aa)).

The protein belongs to the class-I aminoacyl-tRNA synthetase family. TyrS type 2 subfamily. Homodimer.

The protein resides in the cytoplasm. It carries out the reaction tRNA(Tyr) + L-tyrosine + ATP = L-tyrosyl-tRNA(Tyr) + AMP + diphosphate + H(+). Catalyzes the attachment of tyrosine to tRNA(Tyr) in a two-step reaction: tyrosine is first activated by ATP to form Tyr-AMP and then transferred to the acceptor end of tRNA(Tyr). The polypeptide is Tyrosine--tRNA ligase (Geobacter metallireducens (strain ATCC 53774 / DSM 7210 / GS-15)).